The sequence spans 172 residues: uncharacterized protein (172 aa).

This is an uncharacterized protein from Treponema pallidum (strain Nichols).